Here is a 334-residue protein sequence, read N- to C-terminus: MIDSRCFAESTINIVSVSGGKDSLAQWILAVENDVPRTTVFADTGHEHSQTMEYLDYLESRLGPVIRVKADFTRRIEGKRKFIAEKWPVSLVEECGMSHEQAAERIAKALEILKPTGNPFLDLCMWKGRFPSTKARFCSLELKHDSVRDKIVLPALEKYDEVILWQGVRAQESPARAALPMWEEDADNTPGLHVYRPILNWTHEDVFALAKRHGIKPNPLYQQGCSRVGCMPCIHARKSELAEIFARWPEEIARVAEWERLVAACSRRGNSTFFPSTHDPRRAEKRIEVVTVEEYGIASYRDWAMTTRGGSQYDLLAATNDKTVCSSVYAGVCE.

Belongs to the PAPS reductase family.

This is an uncharacterized protein from Escherichia phage 186 (Bacteriophage 186).